Reading from the N-terminus, the 210-residue chain is Large ribosomal subunit protein uL4 (210 aa).

Part of the 50S ribosomal subunit. The N-terminus is blocked.

Functionally, one of the primary rRNA binding proteins, this protein initially binds near the 5'-end of the 23S rRNA. It is important during the early stages of 50S assembly. It makes multiple contacts with different domains of the 23S rRNA in the assembled 50S subunit and ribosome. Forms part of the polypeptide exit tunnel. Its function is as follows. This protein can be incorporated into E.coli ribosomes in vivo, which resulted in decreased peptidyltransferase (Ptase) activity of the hybrid ribosomes. The hybrid 50S subunits associate less well with 30S subunits to form the ribosome. The polypeptide is Large ribosomal subunit protein uL4 (rplD) (Thermus thermophilus (strain ATCC 27634 / DSM 579 / HB8)).